Here is a 218-residue protein sequence, read N- to C-terminus: Small ribosomal subunit protein uS3 (218 aa).

Residues 38 to 107 (VREYIEKRLK…RVHVNVVEVK (70 aa)) form the KH type-2 domain.

The protein belongs to the universal ribosomal protein uS3 family. Part of the 30S ribosomal subunit. Forms a tight complex with proteins S10 and S14.

In terms of biological role, binds the lower part of the 30S subunit head. Binds mRNA in the 70S ribosome, positioning it for translation. The protein is Small ribosomal subunit protein uS3 of Exiguobacterium sibiricum (strain DSM 17290 / CCUG 55495 / CIP 109462 / JCM 13490 / 255-15).